A 116-amino-acid polypeptide reads, in one-letter code: uncharacterized protein (116 aa).

2 consecutive transmembrane segments (helical) span residues 55 to 77 (LSYS…LYSF) and 87 to 109 (FSYG…YAAL).

It localises to the membrane. This is an uncharacterized protein from Saccharomyces cerevisiae (strain ATCC 204508 / S288c) (Baker's yeast).